The chain runs to 251 residues: Lactose phosphotransferase system repressor (251 aa).

The HTH deoR-type domain occupies 3–58 (KHERLDEIAKLVNKKGTIRTNEIVEGLNVSDMTVRRDLIELENKGILTKIHGGARS). Positions 20-39 (IRTNEIVEGLNVSDMTVRRD) form a DNA-binding region, H-T-H motif.

Its function is as follows. Repressor of the lactose catabolism operon. Galactose-6-phosphate is the inducer. The polypeptide is Lactose phosphotransferase system repressor (lacR) (Staphylococcus aureus (strain NCTC 8325 / PS 47)).